The sequence spans 62 residues: Ponericin-W-like 32.2 (62 aa).

An N-terminal signal peptide occupies residues 1–23; it reads MKCKKQLLVIFFAYFLVVNESEA. Positions 49–62 are excised as a propeptide; that stretch reads RALMKRDLEDIMDP.

It belongs to the non-disulfide-bridged peptide (NDBP) superfamily. Medium-length antimicrobial peptide (group 3) family. Ponericin-W subfamily. As to expression, expressed by the venom gland.

It is found in the secreted. It localises to the target cell membrane. Antimicrobial peptide with potent activity against a range of Gram-positive and Gram-negative bacteria. Has high hemolytic activity against erythrocytes. May act by disrupting the integrity of the bacterial cell membrane. The chain is Ponericin-W-like 32.2 from Lychas mucronatus (Chinese swimming scorpion).